The sequence spans 259 residues: Large ribosomal subunit protein uL3m (259 aa).

Residues 1 to 15 (MQSRFLISPTLIRTF) constitute a mitochondrion transit peptide. Over residues 176–197 (ASHGASLSHRTPGSTGQNTTPS) the composition is skewed to polar residues. Positions 176-208 (ASHGASLSHRTPGSTGQNTTPSRVLPGRKMAGH) are disordered.

Belongs to the universal ribosomal protein uL3 family. As to quaternary structure, component of the mitochondrial large ribosomal subunit (mt-LSU). Mature yeast 74S mitochondrial ribosomes consist of a small (37S) and a large (54S) subunit. The 37S small subunit contains a 15S ribosomal RNA (15S mt-rRNA) and at least 32 different proteins. The 54S large subunit contains a 21S rRNA (21S mt-rRNA) and at least 45 different proteins.

Its subcellular location is the cytoplasm. It localises to the mitochondrion. In terms of biological role, component of the mitochondrial ribosome (mitoribosome), a dedicated translation machinery responsible for the synthesis of mitochondrial genome-encoded proteins, including at least some of the essential transmembrane subunits of the mitochondrial respiratory chain. The mitoribosomes are attached to the mitochondrial inner membrane and translation products are cotranslationally integrated into the membrane. This chain is Large ribosomal subunit protein uL3m (mrpl9), found in Schizosaccharomyces pombe (strain 972 / ATCC 24843) (Fission yeast).